A 127-amino-acid polypeptide reads, in one-letter code: RxLR effector protein CRE6 (127 aa).

Positions 1–19 (MIRNALLVLVFVLIGTISA) are cleaved as a signal peptide. Residues 48 to 67 (RLLRQGSVKEGGVHDATEER) carry the RxLR-dEER motif.

The protein belongs to the RxLR effector family.

Its subcellular location is the secreted. It localises to the host cell. Effector that is involved in host plant infection. Contributes to virulence during the early infection stage, by inhibiting plant defense responses induced by both PAMP-triggered immunity (PTI) and effector-triggered immunity (ETI). In Phytophthora infestans (strain T30-4) (Potato late blight agent), this protein is RxLR effector protein CRE6.